Reading from the N-terminus, the 629-residue chain is Protein SPT2 homolog (629 aa).

Positions 1–522 (MDFDSVLSIA…SGHRILVKPS (522 aa)) are important for interaction with DNA. Residues 45 to 72 (QAFLKKKAVEQKNKEQQDKKAKEDLLAK) are a coiled coil. A compositionally biased stretch (basic and acidic residues) spans 53–93 (VEQKNKEQQDKKAKEDLLAKRVELKSDRKARAMASRTKDNF). Disordered regions lie at residues 53 to 181 (VEQK…ASSS), 206 to 533 (KTEE…TSSY), and 608 to 629 (EDEEEERRELEEMQRKNAKKRK). The span at 111–123 (KGSSTEEQQSSTK) shows a compositional bias: polar residues. Acidic residues predominate over residues 127-144 (GDYDDEDNFDYEGTDSES). A coiled-coil region spans residues 203–228 (VVKKTEERLRTAEEIRELEMERRVKK). Composition is skewed to basic and acidic residues over residues 206–247 (KTEE…KDSR) and 257–277 (KHVDRDGKNGRFPRPSEEKHQ). Polar residues-rich tracts occupy residues 278-297 (SSSTSKKPKLQASSERTPTS), 305-327 (SNSGSSGALNSKSAMKNGASFQA), 335-345 (SQGQRPATPSD), 353-364 (VSLTQAKSSISG), 387-398 (SNFSTSGPSQKP), 437-450 (NLQSQQFPGSSRAS), and 462-490 (SGSQINRMSSGPGRSQCTVVSETISTKNI). Residues 523–629 (GPALPPITSS…MQRKNAKKRK (107 aa)) form an important for interaction with histones region. Positions 591 to 629 (WKEQQKEEARSLRMAVLEDEEEERRELEEMQRKNAKKRK) form a coiled coil.

This sequence belongs to the SPT2 family. In terms of assembly, interacts with histones. Interacts with a heterotetrameric complex formed by histone H3 and H4, especially when the histone tetramer is not bound to DNA.

Its subcellular location is the nucleus. It localises to the nucleolus. Histone chaperone that stabilizes pre-existing histone tetramers and regulates replication-independent histone exchange on chromatin. Required for normal chromatin refolding in the coding region of transcribed genes, and for the suppression of spurious transcription. Binds DNA and histones and promotes nucleosome assembly (in vitro). Facilitates formation of tetrameric histone complexes containing histone H3 and H4. Modulates RNA polymerase 1-mediated transcription. Binds DNA, with a preference for branched DNA species, such as Y-form DNA and Holliday junction DNA. The sequence is that of Protein SPT2 homolog (spty2d1) from Danio rerio (Zebrafish).